We begin with the raw amino-acid sequence, 203 residues long: Chemotactic transduction protein ChpE (203 aa).

A run of 5 helical transmembrane segments spans residues 3–23 (AIFL…GAVF), 46–66 (LIGD…LLGY), 69–89 (VRIP…VQGL), 123–143 (NVVY…GTPN), and 149–169 (VFFA…AALV).

The protein belongs to the Rht family.

Its subcellular location is the cell membrane. This Pseudomonas aeruginosa (strain ATCC 15692 / DSM 22644 / CIP 104116 / JCM 14847 / LMG 12228 / 1C / PRS 101 / PAO1) protein is Chemotactic transduction protein ChpE (chpE).